The chain runs to 393 residues: tRNA-specific 2-thiouridylase MnmA (393 aa).

ATP contacts are provided by residues 19-26 (AMSGGVDS) and Leu45. The active-site Nucleophile is Cys113. Cys113 and Cys210 form a disulfide bridge. Position 137 (Gly137) interacts with ATP. The interval 160-162 (RDQ) is interaction with tRNA. The active-site Cysteine persulfide intermediate is the Cys210.

This sequence belongs to the MnmA/TRMU family.

It localises to the cytoplasm. The catalysed reaction is S-sulfanyl-L-cysteinyl-[protein] + uridine(34) in tRNA + AH2 + ATP = 2-thiouridine(34) in tRNA + L-cysteinyl-[protein] + A + AMP + diphosphate + H(+). Functionally, catalyzes the 2-thiolation of uridine at the wobble position (U34) of tRNA, leading to the formation of s(2)U34. The sequence is that of tRNA-specific 2-thiouridylase MnmA from Afipia carboxidovorans (strain ATCC 49405 / DSM 1227 / KCTC 32145 / OM5) (Oligotropha carboxidovorans).